The sequence spans 428 residues: MSDVLSQYKGCSVRDLPTPNFVINEEKFDKNCTTMLNNVEKLSQECGVPIKFRAHVKTHKTAKGTLKQLGHGLPLAKRTTRAILVSTLKEAEELLNYQDRQCSDYIDDITYSLPCCVPEFIPLLSNLSRRVNNFQVFVDNIEHLENLKNFGRPASGKKWSVFIKVDMGTKRAGLAFDSPEFLSLLKKLTSSEIKEVIEPYGFYAHAGHSYSSTSINDTQNLLMEEVKAVNSAAKVLCSVDPQFDPSKLTLSVGATPTSNSLKLDNKSTLVKFITTQLVSTLEIHCGNYCMYDLQQVATGCVQDHELSGFVLGTVLSSYPSRGELLSNTGVMCLTREASSIKGFGICADLEHVLKSESFSREWYVARVSQEHGILRPIRNWNETTPLKLGSKIAVLPQHACITMGQFPYYFVVNSEGIVNDVWLPFQKW.

Lys-57 carries the post-translational modification N6-(pyridoxal phosphate)lysine. Pyridoxal 5'-phosphate-binding residues include Tyr-203, Tyr-210, Thr-255, Gly-286, and Asn-287. Zn(2+) is bound by residues His-398 and Cys-400.

Belongs to the DSD1 family. As to quaternary structure, homodimer. Requires pyridoxal 5'-phosphate as cofactor. It depends on Zn(2+) as a cofactor.

It carries out the reaction D-serine = pyruvate + NH4(+). Sodium cyanoborohydride, N-ethylmaleimide, hydroxylamine, phenyhydrazin and EDTA are inhibitors of the catalytic activity. Its function is as follows. Catalyzes the conversion of D-serine to pyruvate and ammonia. May play a role in D-serine detoxification. The chain is D-serine dehydratase from Saccharomyces cerevisiae (strain ATCC 204508 / S288c) (Baker's yeast).